The chain runs to 133 residues: Holo-[acyl-carrier-protein] synthase (133 aa).

Aspartate 8 and glutamate 57 together coordinate Mg(2+).

The protein belongs to the P-Pant transferase superfamily. AcpS family. Mg(2+) serves as cofactor.

It is found in the cytoplasm. The catalysed reaction is apo-[ACP] + CoA = holo-[ACP] + adenosine 3',5'-bisphosphate + H(+). Transfers the 4'-phosphopantetheine moiety from coenzyme A to a Ser of acyl-carrier-protein. The sequence is that of Holo-[acyl-carrier-protein] synthase from Caulobacter vibrioides (strain ATCC 19089 / CIP 103742 / CB 15) (Caulobacter crescentus).